The chain runs to 420 residues: Tyrosine--tRNA ligase (420 aa).

Tyrosine 33 contacts L-tyrosine. The 'HIGH' region signature appears at 38–47 (PTADSLHIGH). Tyrosine 168 and glutamine 172 together coordinate L-tyrosine. The 'KMSKS' region motif lies at 231 to 235 (KFGKT). ATP is bound at residue lysine 234. The S4 RNA-binding domain maps to 353–419 (MLLVDALIKV…GKKNYYLVKL (67 aa)).

Belongs to the class-I aminoacyl-tRNA synthetase family. TyrS type 1 subfamily. As to quaternary structure, homodimer.

The protein localises to the cytoplasm. It catalyses the reaction tRNA(Tyr) + L-tyrosine + ATP = L-tyrosyl-tRNA(Tyr) + AMP + diphosphate + H(+). Functionally, catalyzes the attachment of tyrosine to tRNA(Tyr) in a two-step reaction: tyrosine is first activated by ATP to form Tyr-AMP and then transferred to the acceptor end of tRNA(Tyr). This chain is Tyrosine--tRNA ligase, found in Desulfitobacterium hafniense (strain Y51).